The following is a 342-amino-acid chain: 4-hydroxy-2-oxovalerate aldolase (342 aa).

Residues 5 to 257 (ITLHDMTLRD…DTGVDVWKIQ (253 aa)) enclose the Pyruvate carboxyltransferase domain. 13-14 (RD) lines the substrate pocket. Position 14 (aspartate 14) interacts with Mn(2+). The Proton acceptor role is filled by histidine 17. The substrate site is built by serine 167 and histidine 196. Residues histidine 196 and histidine 198 each contribute to the Mn(2+) site. Tyrosine 287 contributes to the substrate binding site.

This sequence belongs to the 4-hydroxy-2-oxovalerate aldolase family.

It catalyses the reaction (S)-4-hydroxy-2-oxopentanoate = acetaldehyde + pyruvate. The sequence is that of 4-hydroxy-2-oxovalerate aldolase from Acidovorax sp. (strain JS42).